The chain runs to 367 residues: 4-hydroxyphenylpyruvate dioxygenase (367 aa).

VOC domains lie at Gly3–Arg135 and Leu166–Asn324. The Fe cation site is built by His169, His252, and Glu335.

Belongs to the 4HPPD family. The cofactor is Fe cation.

The enzyme catalyses 3-(4-hydroxyphenyl)pyruvate + O2 = homogentisate + CO2. It participates in amino-acid degradation; L-phenylalanine degradation; acetoacetate and fumarate from L-phenylalanine: step 3/6. In terms of biological role, key enzyme in the degradation of tyrosine. This Dictyostelium discoideum (Social amoeba) protein is 4-hydroxyphenylpyruvate dioxygenase (hpd).